We begin with the raw amino-acid sequence, 284 residues long: Short chain dehydrogenase/reductase AacuD (284 aa).

Valine 37 lines the NADP(+) pocket. Active-site proton donor residues include serine 166 and tyrosine 180. Residues tyrosine 180, lysine 184, and threonine 215 each coordinate NADP(+). The active-site Lowers pKa of active site Tyr is lysine 184.

It belongs to the short-chain dehydrogenases/reductases (SDR) family.

It functions in the pathway secondary metabolite biosynthesis. In terms of biological role, short chain dehydrogenase/reductase; part of the gene cluster that mediates the biosynthesis of the tetrahydroxanthone dimer secalonic acid D. The pathway begins with the synthesis of atrochrysone thioester by the polyketide synthase AacuL. The atrochrysone carboxyl ACP thioesterase AacuM then breaks the thioester bond and releases the atrochrysone carboxylic acid from AacuL. Atrochrysone carboxylic acid is decarboxylated by the decarboxylase AacuI, and oxidized by the anthrone oxygenase AacuG to yield emodin. Emodin is then reduced to emodin hydroquinone by a yet unidentified oxidoreductase. A-ring reduction by the short chain dehydrogenase AacuN, dehydration by the scytalone dehydratase-like protein AacuK and probable spontaneous re-oxidation, results in overall deoxygenation to chrysophanol. Baeyer-Villiger oxidation by the Baeyer-Villiger monooxygenase (BVMO) AacuH then yields monodictyphenone. Monodictyphenone is transformed into compounds with the tetrahydroxanthone skeleton via methylesterification by the methyltransferase AacuQ, followed by the action of the flavin-dependent monooxygenase AacuC, the isomerase AacuP, and the short chain dehydrogenase/reductase AacuF or AacuD. AacuF and AacuD should accept the same compound as a substrate but perform the ketoreduction with a different stereoselectivity, thus yielding blennolides B and A, respectively. In the final step of the biosynthesis, the cytochrome P450 monooxygenase AacuE accepts blennolide B and/or blennolide A to conduct the dimerization reaction to furnish the tetrahydroxanthone dimers, secalonic acids D, B, and F. The chain is Short chain dehydrogenase/reductase AacuD from Aspergillus aculeatus (strain ATCC 16872 / CBS 172.66 / WB 5094).